Consider the following 416-residue polypeptide: 4-hydroxy-3-methylbut-2-en-1-yl diphosphate synthase (flavodoxin) (416 aa).

4 residues coordinate [4Fe-4S] cluster: cysteine 304, cysteine 307, cysteine 350, and glutamate 357.

This sequence belongs to the IspG family. It depends on [4Fe-4S] cluster as a cofactor.

It catalyses the reaction (2E)-4-hydroxy-3-methylbut-2-enyl diphosphate + oxidized [flavodoxin] + H2O + 2 H(+) = 2-C-methyl-D-erythritol 2,4-cyclic diphosphate + reduced [flavodoxin]. It participates in isoprenoid biosynthesis; isopentenyl diphosphate biosynthesis via DXP pathway; isopentenyl diphosphate from 1-deoxy-D-xylulose 5-phosphate: step 5/6. Converts 2C-methyl-D-erythritol 2,4-cyclodiphosphate (ME-2,4cPP) into 1-hydroxy-2-methyl-2-(E)-butenyl 4-diphosphate. This Rhizobium etli (strain ATCC 51251 / DSM 11541 / JCM 21823 / NBRC 15573 / CFN 42) protein is 4-hydroxy-3-methylbut-2-en-1-yl diphosphate synthase (flavodoxin).